The following is a 397-amino-acid chain: Anhydro-N-acetylmuramic acid kinase (397 aa).

9-16 (GTSYDAID) contacts ATP.

This sequence belongs to the anhydro-N-acetylmuramic acid kinase family.

It carries out the reaction 1,6-anhydro-N-acetyl-beta-muramate + ATP + H2O = N-acetyl-D-muramate 6-phosphate + ADP + H(+). Its pathway is amino-sugar metabolism; 1,6-anhydro-N-acetylmuramate degradation. The protein operates within cell wall biogenesis; peptidoglycan recycling. Catalyzes the specific phosphorylation of 1,6-anhydro-N-acetylmuramic acid (anhMurNAc) with the simultaneous cleavage of the 1,6-anhydro ring, generating MurNAc-6-P. Is required for the utilization of anhMurNAc either imported from the medium or derived from its own cell wall murein, and thus plays a role in cell wall recycling. The protein is Anhydro-N-acetylmuramic acid kinase of Rhodococcus erythropolis (strain PR4 / NBRC 100887).